Consider the following 227-residue polypeptide: Sperm-associated antigen 7 (227 aa).

The disordered stretch occupies residues 1 to 45 (MADLLGSILSSMEKPPSLGDQESRRKAREQAARLKKLQEQDKQQK). Ala2 carries the N-acetylalanine modification. Over residues 21–45 (QESRRKAREQAARLKKLQEQDKQQK) the composition is skewed to basic and acidic residues. A Nuclear localization signal motif is present at residues 35–51 (KKLQEQDKQQKVEFRKR). Positions 46–109 (VEFRKRMEKE…DCRYVMIFKK (64 aa)) constitute an R3H domain. Phosphoserine is present on Ser114. Residues 118–161 (LDSYRHGEEWDPQKAEEKRKLKELAQKQEEEAAQQGPAVVSPAS) form a disordered region. Residues 119-147 (DSYRHGEEWDPQKAEEKRKLKELAQKQEE) are compositionally biased toward basic and acidic residues. Positions 122-139 (RHGEEWDPQKAEEKRKLK) match the Nuclear localization signal motif. A phosphoserine mark is found at Ser158 and Ser202.

It localises to the nucleus. This is Sperm-associated antigen 7 (Spag7) from Mus musculus (Mouse).